Here is a 132-residue protein sequence, read N- to C-terminus: Small ribosomal subunit protein uS8 (132 aa).

Belongs to the universal ribosomal protein uS8 family. As to quaternary structure, part of the 30S ribosomal subunit. Contacts proteins S5 and S12.

Its function is as follows. One of the primary rRNA binding proteins, it binds directly to 16S rRNA central domain where it helps coordinate assembly of the platform of the 30S subunit. This Geobacillus sp. (strain WCH70) protein is Small ribosomal subunit protein uS8.